Reading from the N-terminus, the 631-residue chain is Phosphomethylpyrimidine synthase (631 aa).

Residues Asn-239, Met-268, Tyr-297, His-333, 353-355, 394-397, and Glu-433 contribute to the substrate site; these read SRG and DGLR. Residue His-437 coordinates Zn(2+). Residue Tyr-460 coordinates substrate. A Zn(2+)-binding site is contributed by His-501. Residues Cys-581, Cys-584, and Cys-589 each contribute to the [4Fe-4S] cluster site.

This sequence belongs to the ThiC family. In terms of assembly, homodimer. [4Fe-4S] cluster is required as a cofactor.

The enzyme catalyses 5-amino-1-(5-phospho-beta-D-ribosyl)imidazole + S-adenosyl-L-methionine = 4-amino-2-methyl-5-(phosphooxymethyl)pyrimidine + CO + 5'-deoxyadenosine + formate + L-methionine + 3 H(+). It participates in cofactor biosynthesis; thiamine diphosphate biosynthesis. Catalyzes the synthesis of the hydroxymethylpyrimidine phosphate (HMP-P) moiety of thiamine from aminoimidazole ribotide (AIR) in a radical S-adenosyl-L-methionine (SAM)-dependent reaction. This is Phosphomethylpyrimidine synthase from Salmonella heidelberg (strain SL476).